The primary structure comprises 628 residues: U-box domain-containing protein 10 (628 aa).

A U-box domain is found at 242 to 316 (TIPEDFLCPI…SQWCTKHNIE (75 aa)). ARM repeat units lie at residues 373-413 (TDNR…NLSI), 415-454 (EHNK…SLSL), 456-495 (DENK…NLCI), 497-537 (QGNK…VLAS), and 539-578 (QVAK…CLCK).

It carries out the reaction S-ubiquitinyl-[E2 ubiquitin-conjugating enzyme]-L-cysteine + [acceptor protein]-L-lysine = [E2 ubiquitin-conjugating enzyme]-L-cysteine + N(6)-ubiquitinyl-[acceptor protein]-L-lysine.. It functions in the pathway protein modification; protein ubiquitination. In terms of biological role, functions as an E3 ubiquitin ligase. The sequence is that of U-box domain-containing protein 10 (PUB10) from Arabidopsis thaliana (Mouse-ear cress).